A 399-amino-acid polypeptide reads, in one-letter code: Elongation factor Tu (399 aa).

One can recognise a tr-type G domain in the interval 10 to 204; the sequence is KPHVNIGTIG…AVDASIPEPE (195 aa). The tract at residues 19–26 is G1; sequence GHVDHGKT. 19–26 provides a ligand contact to GTP; sequence GHVDHGKT. Residue Thr-26 coordinates Mg(2+). Positions 60–64 are G2; it reads GITIN. The interval 81–84 is G3; sequence DCPG. GTP-binding positions include 81 to 85 and 136 to 139; these read DCPGH and NKCD. The segment at 136–139 is G4; it reads NKCD. Positions 174 to 176 are G5; sequence SGL.

Belongs to the TRAFAC class translation factor GTPase superfamily. Classic translation factor GTPase family. EF-Tu/EF-1A subfamily. Monomer.

It localises to the cytoplasm. It carries out the reaction GTP + H2O = GDP + phosphate + H(+). Functionally, GTP hydrolase that promotes the GTP-dependent binding of aminoacyl-tRNA to the A-site of ribosomes during protein biosynthesis. The sequence is that of Elongation factor Tu from Prochlorococcus marinus (strain MIT 9215).